The sequence spans 206 residues: Adenylate kinase (206 aa).

Positions 1 to 21 are disordered; sequence MSQPKILLLGAPGAGKGTQSS. Residue 13-18 participates in ATP binding; sequence GAGKGT. Residues 33 to 61 form an NMP region; sequence TTGDALRANKDMETEHGTPREFMEAGELV. Residues Thr-34, Arg-39, 59–61, 84–87, and Gln-91 each bind AMP; these read ELV and GYPR. The segment at 120–153 is LID; the sequence is GRRMDPETGDIYHTEFNMPDDEEVRERLVQRDDD. ATP contacts are provided by residues Arg-121 and 130–131; that span reads IY. Residues Arg-150 and Arg-161 each contribute to the AMP site. Ala-189 serves as a coordination point for ATP.

Belongs to the adenylate kinase family. In terms of assembly, monomer.

It localises to the cytoplasm. The enzyme catalyses AMP + ATP = 2 ADP. It functions in the pathway purine metabolism; AMP biosynthesis via salvage pathway; AMP from ADP: step 1/1. Functionally, catalyzes the reversible transfer of the terminal phosphate group between ATP and AMP. Plays an important role in cellular energy homeostasis and in adenine nucleotide metabolism. The chain is Adenylate kinase from Natronomonas pharaonis (strain ATCC 35678 / DSM 2160 / CIP 103997 / JCM 8858 / NBRC 14720 / NCIMB 2260 / Gabara) (Halobacterium pharaonis).